The chain runs to 107 residues: Replication initiation control protein YabA (107 aa).

4 residues coordinate Zn(2+): H81, C83, C97, and C100.

Belongs to the YabA family. In terms of assembly, homotetramer. Interacts with both DnaA and DnaN, acting as a bridge between these two proteins. Requires Zn(2+) as cofactor.

It is found in the cytoplasm. The protein resides in the nucleoid. In terms of biological role, involved in control of chromosome replication initiation. Inhibits the cooperative binding of DnaA to the oriC region, thus negatively regulating initiation of chromosome replication. Inhibits the ability of DnaA-ATP to form a helix on DNA; does not disassemble preformed DnaA-DNA helices. Decreases the residence time of DnaA on the chromosome at its binding sites (oriC, replication forks and promoter-binding sites). Tethers DnaA to the replication machinery via the DNA polymerase beta sliding clamp subunit (dnaN). Associates with oriC and other DnaA targets on the chromosome in a DnaA-dependent manner. The sequence is that of Replication initiation control protein YabA from Streptococcus equi subsp. zooepidemicus (strain MGCS10565).